A 233-amino-acid polypeptide reads, in one-letter code: TATA-box-binding protein 1 (233 aa).

2 repeat units span residues 58 to 134 (LQNI…ARIV) and 148 to 225 (IQNI…YPVL).

Belongs to the TBP family. Belongs to the TFIID complex together with the TBP-associated factors (TAFs). Binds DNA as monomer.

It is found in the nucleus. Its function is as follows. General transcription factor that functions at the core of the DNA-binding multiprotein factor TFIID. Binding of TFIID to the TATA box is the initial transcriptional step of the pre-initiation complex (PIC), playing a role in the activation of eukaryotic genes transcribed by RNA polymerase II. This Triticum aestivum (Wheat) protein is TATA-box-binding protein 1 (TBP1).